A 216-amino-acid polypeptide reads, in one-letter code: UPF0323 lipoprotein HPAG1_0235 (216 aa).

The N-terminal stretch at 1–27 (MKKPYRKISDYAIVGGLSALVMVSIVG) is a signal peptide. A lipid anchor (N-palmitoyl cysteine) is attached at Cys-28. Cys-28 carries S-diacylglycerol cysteine lipidation. Residues 159-196 (QRTYKSPQAYQRSQNSFSKSAPSASGMGTASKGQSGFF) show a composition bias toward polar residues. Residues 159–216 (QRTYKSPQAYQRSQNSFSKSAPSASGMGTASKGQSGFFGSSRPTSSPAVSSGTRGFNA) are disordered. A compositionally biased stretch (low complexity) spans 198–209 (SSRPTSSPAVSS).

The protein belongs to the UPF0323 family.

It localises to the cell membrane. In Helicobacter pylori (strain HPAG1), this protein is UPF0323 lipoprotein HPAG1_0235.